The sequence spans 225 residues: Ribonuclease 3 (225 aa).

The region spanning 2–128 (LSTLIKKLKI…LFGAIYLDLG (127 aa)) is the RNase III domain. Glu43 serves as a coordination point for Mg(2+). The active site involves Asp47. Residues Asn114 and Glu117 each contribute to the Mg(2+) site. Residue Glu117 is part of the active site. The region spanning 152–220 (DFKTQLQELV…ARYVLNILSK (69 aa)) is the DRBM domain.

It belongs to the ribonuclease III family. Homodimer. The cofactor is Mg(2+).

It is found in the cytoplasm. It catalyses the reaction Endonucleolytic cleavage to 5'-phosphomonoester.. Digests double-stranded RNA. Involved in the processing of primary rRNA transcript to yield the immediate precursors to the large and small rRNAs (23S and 16S). Processes some mRNAs, and tRNAs when they are encoded in the rRNA operon. Processes pre-crRNA and tracrRNA of type II CRISPR loci if present in the organism. The protein is Ribonuclease 3 of Phytoplasma mali (strain AT).